Consider the following 185-residue polypeptide: Ribosome-recycling factor (185 aa).

Belongs to the RRF family.

The protein localises to the cytoplasm. Functionally, responsible for the release of ribosomes from messenger RNA at the termination of protein biosynthesis. May increase the efficiency of translation by recycling ribosomes from one round of translation to another. In Halalkalibacterium halodurans (strain ATCC BAA-125 / DSM 18197 / FERM 7344 / JCM 9153 / C-125) (Bacillus halodurans), this protein is Ribosome-recycling factor.